The following is a 575-amino-acid chain: Cytoskeleton-associated protein 4 (575 aa).

The tract at residues 1–73 (MPSAKQRGSK…RGRSSAATAN (73 aa)) is disordered. At 1–85 (MPSAKQRGSK…SASCSRRLGR (85 aa)) the chain is on the cytoplasmic side. Phosphoserine occurs at positions 3, 17, and 19. K21 carries the N6-acetyllysine modification. Residues 37-53 (PAAPQQPQPPAPHPPQH) show a composition bias toward pro residues. The S-palmitoyl cysteine; by ZDHHC2 moiety is linked to residue C79. A helical membrane pass occupies residues 86 to 108 (VLNFLFYLSLVAAAAFSGWYVHH). Over 109-575 (VLEEVQQVRR…LKVEKIHEKI (467 aa)) the chain is Extracellular. Residues 125–193 (RQRDELGQGL…QKLQNEILKD (69 aa)) adopt a coiled-coil conformation. S211, S292, and S367 each carry phosphoserine. Coiled-coil stretches lie at residues 236 to 438 (DVQK…VGNL) and 507 to 575 (SSLD…HEKI).

In terms of assembly, interacts with REEP5. Post-translationally, reversibly palmitoylated. Palmitoylation at Cys-79 by DHHC2 is required for its trafficking from the ER to the plasma membrane and for its perinuclear localization. In terms of processing, increased phosphorylation during mitosis prevents binding to microtubules. As to expression, expressed in cardiomyocytes (at protein level).

The protein resides in the endoplasmic reticulum membrane. It is found in the cell membrane. Its subcellular location is the cytoplasm. It localises to the cytoskeleton. The protein localises to the perinuclear region. Functionally, high-affinity epithelial cell surface receptor for APF. Mediates the anchoring of the endoplasmic reticulum to microtubules. The polypeptide is Cytoskeleton-associated protein 4 (Ckap4) (Mus musculus (Mouse)).